A 176-amino-acid chain; its full sequence is Large ribosomal subunit protein uL10 (176 aa).

It belongs to the universal ribosomal protein uL10 family. As to quaternary structure, part of the ribosomal stalk of the 50S ribosomal subunit. The N-terminus interacts with L11 and the large rRNA to form the base of the stalk. The C-terminus forms an elongated spine to which L12 dimers bind in a sequential fashion forming a multimeric L10(L12)X complex.

In terms of biological role, forms part of the ribosomal stalk, playing a central role in the interaction of the ribosome with GTP-bound translation factors. This is Large ribosomal subunit protein uL10 from Coprothermobacter proteolyticus (strain ATCC 35245 / DSM 5265 / OCM 4 / BT).